A 134-amino-acid polypeptide reads, in one-letter code: Calcitonin gene-related peptide 2 (134 aa).

An N-terminal signal peptide occupies residues 1-26 (MDFWKFFPFLALSSMWVLCLASSLQA). Residues 27-86 (APFRSALESSLDLGTLSDQEKHLLLAALIQDYEQKARKLEQEEQETEGSRKGSSSSVISQ) constitute a propeptide that is removed on maturation. The interval 65–91 (LEQEEQETEGSRKGSSSSVISQKRSCN) is disordered. The segment covering 77 to 89 (KGSSSSVISQKRS) has biased composition (low complexity). C90 and C95 are disulfide-bonded. A Phenylalanine amide modification is found at F125. Positions 131-134 (DLRV) are excised as a propeptide.

This sequence belongs to the calcitonin family.

Its subcellular location is the secreted. CALCB/CGRP2 is a peptide hormone that induces vasodilation mediated by the CALCRL-RAMP1 receptor complex. Dilates a variety of vessels including the coronary, cerebral and systemic vasculature. Its abundance in the CNS also points toward a neurotransmitter or neuromodulator role. This chain is Calcitonin gene-related peptide 2, found in Rattus norvegicus (Rat).